Consider the following 404-residue polypeptide: Acetylornithine/succinyldiaminopimelate aminotransferase (404 aa).

Pyridoxal 5'-phosphate-binding positions include 108–109 and Phe141; that span reads GA. Arg144 contacts N(2)-acetyl-L-ornithine. 226-229 contacts pyridoxal 5'-phosphate; sequence DEIQ. At Lys255 the chain carries N6-(pyridoxal phosphate)lysine. Residue Thr283 participates in N(2)-acetyl-L-ornithine binding. Thr284 is a pyridoxal 5'-phosphate binding site.

This sequence belongs to the class-III pyridoxal-phosphate-dependent aminotransferase family. ArgD subfamily. In terms of assembly, homodimer. It depends on pyridoxal 5'-phosphate as a cofactor.

The protein localises to the cytoplasm. It carries out the reaction N(2)-acetyl-L-ornithine + 2-oxoglutarate = N-acetyl-L-glutamate 5-semialdehyde + L-glutamate. It catalyses the reaction N-succinyl-(2S,6S)-2,6-diaminopimelate + 2-oxoglutarate = (S)-2-succinylamino-6-oxoheptanedioate + L-glutamate. It functions in the pathway amino-acid biosynthesis; L-arginine biosynthesis; N(2)-acetyl-L-ornithine from L-glutamate: step 4/4. It participates in amino-acid biosynthesis; L-lysine biosynthesis via DAP pathway; LL-2,6-diaminopimelate from (S)-tetrahydrodipicolinate (succinylase route): step 2/3. Functionally, involved in both the arginine and lysine biosynthetic pathways. This Buchnera aphidicola subsp. Schizaphis graminum (strain Sg) protein is Acetylornithine/succinyldiaminopimelate aminotransferase.